Consider the following 2731-residue polypeptide: MNPYEYESTLDCRDVGGGPTPAHAHPHAQGRTLPMSGHGRPTTDLGPVHGSQTLQHQNQQNLQAAQAAAQSSHYDYEYQHLAHRPPDTANNTAQRTHGRQGFLLEGVTPTAPPDVPPRNPTMSRMQNGRLTVNNPNDADFEPSCLVRTPSGNVYIPSGNLNINKGSPIDFKSGSACSTPTKDTLKGYERSTQGCMGPVLPQRSVMNGLPAHHYSAPMNFRKDLVARCSSPWFGIGSISVLFAFVVMLILLTTTGVIKWNQSPPCSVLVGNEASEVTAAKSTNTDLSKLHNSSVRAKNGQGIGLAQGQSGLGAAGVGSGGGSSAATVTTATSNSGTAQGLQSTSASAEATSSAATSSSQSSLTPSLSSSLANANNGGARTFPARSFPPDGTTFGQITLGQKLTKEIQPYSYWNMQFYQSEPAYVKFDYTIPRGASIGVYGRRNALPTHTQYHFKEVLSGFSASTRTARAAHLSITREVTRYMEPGHWFVSLYNDDGDVQELTFYAAVAEDMTQNCPNGCSGNGQCLLGHCQCNPGFGGDDCSESVCPVLCSQHGEYTNGECICNPGWKGKECSLRHDECEVADCSGHGHCVSGKCQCMRGYKGKFCEEVDCPHPNCSGHGFCADGTCICKKGWKGPDCATMDQDALQCLPDCSGHGTFDLDTQTCTCEAKWSGDDCSKELCDLDCGQHGRCEGDACACDPEWGGEYCNTRLCDVRCNEHGQCKNGTCLCVTGWNGKHCTIEGCPNSCAGHGQCRVSGEGQWECRCYEGWDGPDCGIALELNCGDSKDNDKDGLVDCEDPECCASHVCKTSQLCVSAPKPIDVLLRKQPPAITASFFERMKFLIDESSLQNYAKLETFNESRSAVIRGRVVTSLGMGLVGVRVSTTTLLEGFTLTRDDGWFDLMVNGGGAVTLQFGRAPFRPQSRIVQVPWNEVVIIDLVVMSMSEEKGLAVTTTHTCFAHDYDLMKPVVLASWKHGFQGACPDRSAILAESQVIQESLQIPGTGLNLVYHSSRAAGYLSTIKLQLTPDVIPTSLHLIHLRITIEGILFERIFEADPGIKFTYAWNRLNIYRQRVYGVTTAVVKVGYQYTDCTDIVWDIQTTKLSGHDMSISEVGGWNLDIHHRYNFHEGILQKGDGSNIYLRNKPRIILTTMGDGHQRPLECPDCDGQATKQRLLAPVALAAAPDGSLFVGDFNYIRRIMTDGSIRTVVKLNATRVSYRYHMALSPLDGTLYVSDPESHQIIRVRDTNDYSQPELNWEAVVGSGERCLPGDEAHCGDGALAKDAKLAYPKGIAISSDNILYFADGTNIRMVDRDGIVSTLIGNHMHKSHWKPIPCEGTLKLEEMHLRWPTELAVSPMDNTLHIIDDHMILRMTPDGRVRVISGRPLHCATASTAYDTDLATHATLVMPQSIAFGPLGELYVAESDSQRINRVRVIGTDGRIAPFAGAESKCNCLERGCDCFEAEHYLATSAKFNTIAALAVTPDSHVHIADQANYRIRSVMSSIPEASPSREYEIYAPDMQEIYIFNRFGQHVSTRNILTGETTYVFTYNVNTSNGKLSTVTDAAGNKVFLLRDYTSQVNSIENTKGQKCRLRMTRMKMLHELSTPDNYNVTYEYHGPTGLLRTKLDSTGRSYVYNYDEFGRLTSAVTPTGRVIELSFDLSVKGAQVKVSENAQKEMSLLIQGATVIVRNGAAESRTTVDMDGSTTSITPWGHNLQMEVAPYTILAEQSPLLGESYPVPAKQRTEIAGDLANRFEWRYFVRRQQPLQAGKQSKGPPRPVTEVGRKLRVNGDNVLTLEYDRETQSVVVMVDDKQELLNVTYDRTSRPISFRPQSGDYADVDLEYDRFGRLVSWKWGVLQEAYSFDRNGRLNEIKYGDGSTMVYAFKDMFGSLPLKVTTPRRSDYLLQYDDAGALQSLTTPRGHIHAFSLQTSLGFFKYQYYSPINRHPFEILYNDEGQILAKIHPHQSGKVAFVHDTAGRLETILAGLSSTHYTYQDTTSLVKSVEVQEPGFELRREFKYHAGILKDEKLRFGSKNSLASARYKYAYDGNARLSGIEMAIDDKELPTTRYKYSQNLGQLEVVQDLKITRNAFNRTVIQDSAKQFFAIVDYDQHGRVKSVLMNVKNIDVFRLELDYDLRNRIKSQKTTFGRSTAFDKINYNADGHVVEVLGTNNWKYLFDENGNTVGVVDQGEKFNLGYDIGDRVIKVGDVEFNNYDARGFVVKRGEQKYRYNNRGQLIHSFERERFQSWYYYDDRSRLVAWHDNKGNTTQYYYANPRTPHLVTHVHFPKISRTMKLFYDDRDMLIALEHEDQRYYVATDQNGSPLAFFDQNGSIVKEMKRTPFGRIIKDTKPEFFVPIDFHGGLIDPHTKLVYTEQRQYDPHVGQWMTPLWETLATEMSHPTDVFIYRYHNNDPINPNKPQNYMIDLDSWLQLFGYDLNNMQSSRYTKLAQYTPQASIKSNTLAPDFGVISGLECIVEKTSEKFSDFDFVPKPLLKMEPKMRNLLPRVSYRRGVFGEGVLLSRIGGRALVSVVDGSNSVVQDVVSSVFNNSYFLDLHFSIHDQDVFYFVKDNVLKLRDDNEELRRLGGMFNISTHEISDHGGSAAKELRLHGPDAVVIIKYGVDPEQERHRILKHAHKRAVERAWELEKQLVAAGFQGRGDWTEEEKEELVQHGDVDGWNGIDIHSIHKYPQLADDPGNVAFQRDAKRKRRKTGSSHRSASNRRQLKFGELSA.

Disordered stretches follow at residues Met-1 to Gln-60 and Leu-103 to Asn-136. Residues Met-1 to Ser-229 are Cytoplasmic-facing. The span at Thr-110 to Asn-119 shows a compositional bias: pro residues. Positions Pro-120 to Asn-136 are enriched in polar residues. A helical membrane pass occupies residues Pro-230–Leu-250. The Extracellular portion of the chain corresponds to Thr-251–Ala-2731. The segment at Ser-321 to Pro-387 is disordered. Residues Ser-322–Ala-370 show a composition bias toward low complexity. EGF-like domains lie at Gly-536–Ser-572, Arg-574–Glu-606, Asp-643–Ser-676, and Thr-738–Gly-774. 11 disulfides stabilise this stretch: Cys-540–Cys-549, Cys-545–Cys-560, Cys-562–Cys-571, Cys-578–Cys-589, Cys-583–Cys-594, Cys-596–Cys-605, Cys-651–Cys-664, Cys-666–Cys-675, Cys-742–Cys-752, Cys-746–Cys-762, and Cys-764–Cys-773. N-linked (GlcNAc...) asparagine glycosylation is present at Asn-857. NHL repeat units follow at residues Glu-1160–Asp-1201, Gly-1202–Thr-1246, Ser-1391–Ile-1434, and Cys-1459–Ser-1502. A YD repeat occupies Thr-1618–Val-1652. The interval Leu-2691–Ala-2731 is disordered. Basic residues predominate over residues Ala-2704–Leu-2724.

Belongs to the tenascin family. Teneurin subfamily. Homodimer. Heterodimer with Ten-a. Interacts with Ten-a; the interaction occurs at the neuromuscular junction. Interacts with alpha-Spec and cher. In terms of processing, phosphorylated. Phosphorylation occurs at tyrosine residues. Post-translationally, proteolytically cleaved. Expressed in muscles and motor neurons (at protein level).

It is found in the cytoplasm. The protein localises to the postsynaptic cell membrane. It localises to the synapse. Its subcellular location is the synaptosome. The protein resides in the membrane. Involved in neural development, regulating the establishment of proper connectivity within the nervous system. Acts as a homophilic and heterophilic synaptic cell adhesion molecule that drives synapse assembly. Promotes bi-directional trans-synaptic signaling with Ten-a to organize neuromuscular synapses. Functions in olfactory synaptic partner matching by promoting homophilic cell adhesion between pre-synaptic olfactory receptor neurons (ORN) axons and post-synaptic projection neurons (PN) dendrites partner in the developing antennal lobe to form stable connections. Also required for peripheral axon growth cone guidance and target recognition of motor neurons. The sequence is that of Teneurin-m (Ten-m) from Drosophila melanogaster (Fruit fly).